We begin with the raw amino-acid sequence, 146 residues long: Holo-[acyl-carrier-protein] synthase (146 aa).

Residues Asp-9 and Glu-63 each contribute to the Mg(2+) site.

Belongs to the P-Pant transferase superfamily. AcpS family. The cofactor is Mg(2+).

The protein resides in the cytoplasm. It carries out the reaction apo-[ACP] + CoA = holo-[ACP] + adenosine 3',5'-bisphosphate + H(+). In terms of biological role, transfers the 4'-phosphopantetheine moiety from coenzyme A to a Ser of acyl-carrier-protein. This is Holo-[acyl-carrier-protein] synthase from Burkholderia orbicola (strain MC0-3).